The primary structure comprises 267 residues: 3-isopropylmalate dehydratase large subunit (267 aa).

3 residues coordinate [4Fe-4S] cluster: cysteine 146, cysteine 206, and cysteine 209.

This sequence belongs to the aconitase/IPM isomerase family. LeuC type 1 subfamily. In terms of assembly, heterodimer of LeuC and LeuD. Requires [4Fe-4S] cluster as cofactor.

It catalyses the reaction (2R,3S)-3-isopropylmalate = (2S)-2-isopropylmalate. It participates in amino-acid biosynthesis; L-leucine biosynthesis; L-leucine from 3-methyl-2-oxobutanoate: step 2/4. In terms of biological role, catalyzes the isomerization between 2-isopropylmalate and 3-isopropylmalate, via the formation of 2-isopropylmaleate. In Cupriavidus necator (Alcaligenes eutrophus), this protein is 3-isopropylmalate dehydratase large subunit (leuC).